A 380-amino-acid polypeptide reads, in one-letter code: Alpha-glucoside transport system permease protein AglG (380 aa).

6 helical membrane-spanning segments follow: residues 13 to 33 (VHLS…GLLI), 179 to 199 (VIPI…PFPG), 202 to 222 (VLLA…LIPL), 239 to 259 (TYMG…IYLL), 288 to 308 (IILP…FLWT), and 344 to 364 (EILT…FFAL). The 198-residue stretch at 167–364 (FLNSLTVAVP…VVPLIVFFAL (198 aa)) folds into the ABC transmembrane type-1 domain.

It belongs to the binding-protein-dependent transport system permease family. MalFG subfamily.

Its subcellular location is the cell inner membrane. Part of the binding-protein-dependent transport system for alpha-glucosides such as sucrose, maltose and trehalose. Probably responsible for the translocation of the substrate across the membrane. In Rhizobium meliloti (strain 1021) (Ensifer meliloti), this protein is Alpha-glucoside transport system permease protein AglG (aglG).